A 325-amino-acid chain; its full sequence is 7,8-didemethyl-8-hydroxy-5-deazariboflavin synthase (325 aa).

Residues 1–241 form the Radical SAM core domain; it reads MTYSKNVFVP…SDIAVQVAPN (241 aa). Residues cysteine 15, cysteine 19, and cysteine 22 each coordinate [4Fe-4S] cluster.

This sequence belongs to the radical SAM superfamily. CofG family. As to quaternary structure, consists of two subunits, CofG and CofH. Requires [4Fe-4S] cluster as cofactor.

It catalyses the reaction 5-amino-5-(4-hydroxybenzyl)-6-(D-ribitylimino)-5,6-dihydrouracil + S-adenosyl-L-methionine = 7,8-didemethyl-8-hydroxy-5-deazariboflavin + 5'-deoxyadenosine + L-methionine + NH4(+) + H(+). It participates in cofactor biosynthesis; coenzyme F0 biosynthesis. Functionally, catalyzes the radical-mediated synthesis of 7,8-didemethyl-8-hydroxy-5-deazariboflavin from 5-amino-5-(4-hydroxybenzyl)-6-(D-ribitylimino)-5,6-dihydrouracil. The sequence is that of 7,8-didemethyl-8-hydroxy-5-deazariboflavin synthase from Methanosarcina barkeri (strain Fusaro / DSM 804).